A 254-amino-acid polypeptide reads, in one-letter code: tRNA pseudouridine synthase A (254 aa).

D52 (nucleophile) is an active-site residue. Y111 provides a ligand contact to substrate.

It belongs to the tRNA pseudouridine synthase TruA family. As to quaternary structure, homodimer.

It carries out the reaction uridine(38/39/40) in tRNA = pseudouridine(38/39/40) in tRNA. Functionally, formation of pseudouridine at positions 38, 39 and 40 in the anticodon stem and loop of transfer RNAs. The sequence is that of tRNA pseudouridine synthase A from Rhizorhabdus wittichii (strain DSM 6014 / CCUG 31198 / JCM 15750 / NBRC 105917 / EY 4224 / RW1) (Sphingomonas wittichii).